A 398-amino-acid chain; its full sequence is Exodeoxyribonuclease 7 large subunit (398 aa).

Belongs to the XseA family. Heterooligomer composed of large and small subunits.

It localises to the cytoplasm. It catalyses the reaction Exonucleolytic cleavage in either 5'- to 3'- or 3'- to 5'-direction to yield nucleoside 5'-phosphates.. Functionally, bidirectionally degrades single-stranded DNA into large acid-insoluble oligonucleotides, which are then degraded further into small acid-soluble oligonucleotides. This is Exodeoxyribonuclease 7 large subunit from Chlorobaculum tepidum (strain ATCC 49652 / DSM 12025 / NBRC 103806 / TLS) (Chlorobium tepidum).